The following is a 569-amino-acid chain: Isocitrate dehydrogenase kinase/phosphatase (569 aa).

Residues 316-322 (APGVRGM) and K337 each bind ATP. D372 is a catalytic residue.

This sequence belongs to the AceK family.

The protein localises to the cytoplasm. It catalyses the reaction L-seryl-[isocitrate dehydrogenase] + ATP = O-phospho-L-seryl-[isocitrate dehydrogenase] + ADP + H(+). In terms of biological role, bifunctional enzyme which can phosphorylate or dephosphorylate isocitrate dehydrogenase (IDH) on a specific serine residue. This is a regulatory mechanism which enables bacteria to bypass the Krebs cycle via the glyoxylate shunt in response to the source of carbon. When bacteria are grown on glucose, IDH is fully active and unphosphorylated, but when grown on acetate or ethanol, the activity of IDH declines drastically concomitant with its phosphorylation. The protein is Isocitrate dehydrogenase kinase/phosphatase of Pseudomonas putida (strain W619).